Consider the following 425-residue polypeptide: 3-deoxy-D-manno-octulosonic acid transferase (425 aa).

Residues 3 to 23 traverse the membrane as a helical; Signal-anchor segment; that stretch reads ELLYTALLYLIQPLIWIRLWV. The Proton acceptor role is filled by glutamate 60. Residues 268-269, 309-311, and 335-338 contribute to the CMP site; these read PR, MGE, and NPLE.

This sequence belongs to the glycosyltransferase group 1 family. Glycosyltransferase 30 subfamily.

It is found in the cell inner membrane. The catalysed reaction is lipid IVA (E. coli) + CMP-3-deoxy-beta-D-manno-octulosonate = alpha-Kdo-(2-&gt;6)-lipid IVA (E. coli) + CMP + H(+). The enzyme catalyses alpha-Kdo-(2-&gt;6)-lipid IVA (E. coli) + CMP-3-deoxy-beta-D-manno-octulosonate = alpha-Kdo-(2-&gt;4)-alpha-Kdo-(2-&gt;6)-lipid IVA (E. coli) + CMP + H(+). It participates in glycolipid biosynthesis; KDO(2)-lipid A biosynthesis; KDO(2)-lipid A from CMP-3-deoxy-D-manno-octulosonate and lipid IV(A): step 1/4. Its pathway is glycolipid biosynthesis; KDO(2)-lipid A biosynthesis; KDO(2)-lipid A from CMP-3-deoxy-D-manno-octulosonate and lipid IV(A): step 2/4. It functions in the pathway bacterial outer membrane biogenesis; LPS core biosynthesis. Involved in lipopolysaccharide (LPS) biosynthesis. Catalyzes the transfer of two 3-deoxy-D-manno-octulosonate (Kdo) residues from CMP-Kdo to lipid IV(A), the tetraacyldisaccharide-1,4'-bisphosphate precursor of lipid A. The sequence is that of 3-deoxy-D-manno-octulosonic acid transferase (waaA) from Escherichia coli O157:H7.